A 75-amino-acid chain; its full sequence is MAKVDIDIVDFEYIEEIIRNRYPELSITSVQDSKFWSIQIVIEGPLEDLTRFMANEYCDGMDSEDAEFYMGLIEQ.

This is an uncharacterized protein from Enterobacteria phage LZ5 (Bacteriophage LZ5).